The primary structure comprises 337 residues: DNA-directed RNA polymerase subunit alpha (337 aa).

Residues 1–233 (MVREEVTIST…NLFIPFLHAE (233 aa)) form an alpha N-terminal domain (alpha-NTD) region. The alpha C-terminal domain (alpha-CTD) stretch occupies residues 266-337 (GIALKCIFID…FAMNLPKDFF (72 aa)).

This sequence belongs to the RNA polymerase alpha chain family. In terms of assembly, in plastids the minimal PEP RNA polymerase catalytic core is composed of four subunits: alpha, beta, beta', and beta''. When a (nuclear-encoded) sigma factor is associated with the core the holoenzyme is formed, which can initiate transcription.

The protein resides in the plastid. Its subcellular location is the chloroplast. The catalysed reaction is RNA(n) + a ribonucleoside 5'-triphosphate = RNA(n+1) + diphosphate. Functionally, DNA-dependent RNA polymerase catalyzes the transcription of DNA into RNA using the four ribonucleoside triphosphates as substrates. The sequence is that of DNA-directed RNA polymerase subunit alpha from Ceratophyllum demersum (Rigid hornwort).